The chain runs to 206 residues: Cytidylate kinase (206 aa).

7–15 (GPAASGKGT) is a binding site for ATP.

The protein belongs to the cytidylate kinase family. Type 1 subfamily.

It localises to the cytoplasm. The catalysed reaction is CMP + ATP = CDP + ADP. It carries out the reaction dCMP + ATP = dCDP + ADP. This Azorhizobium caulinodans (strain ATCC 43989 / DSM 5975 / JCM 20966 / LMG 6465 / NBRC 14845 / NCIMB 13405 / ORS 571) protein is Cytidylate kinase.